We begin with the raw amino-acid sequence, 562 residues long: Protein wntless (562 aa).

The Cytoplasmic segment spans residues 1 to 13 (MSGTILENLSGRK). A helical transmembrane segment spans residues 14–34 (LSILVSSLLLCQVACFLIGGL). Topologically, residues 35–239 (YAPVPAGHQI…AIHQNGGFTQ (205 aa)) are lumenal. N-linked (GlcNAc...) asparagine glycans are attached at residues asparagine 58 and asparagine 103. The helical transmembrane segment at 240–260 (VWLLLKSVLFPFIIGIMVWFW) threads the bilayer. The Cytoplasmic portion of the chain corresponds to 261–270 (RRVHILQRSP). A helical transmembrane segment spans residues 271 to 291 (ALLEYMLLYLGGALSFLNLPL). The Lumenal portion of the chain corresponds to 292–311 (EYLTLSFEMPYMLLLSDVRQ). The helical transmembrane segment at 312-332 (GIFYAMLLSFWLVFAGEHMLI) threads the bilayer. At 333 to 344 (QDSPNKSTIRSR) the chain is on the cytoplasmic side. A helical membrane pass occupies residues 345-365 (YWKHLSAVVVGCISLFVFDIC). Residues 366 to 390 (ERGMQLRNPFYSIWTTPLGAKVAMS) lie on the Lumenal side of the membrane. The chain crosses the membrane as a helical span at residues 391-411 (FIVLAGVSAGIYFLFLCYMVW). The Cytoplasmic segment spans residues 412 to 441 (KVFKDIGDKRTSLPSMSQARRLHYEGLIYR). The helical transmembrane segment at 442-462 (FKFLMLATLLCAGLTVAGFIM) threads the bilayer. Residues 463–482 (GQMAEGHWKWNEDIEIQLTS) are Lumenal-facing. The chain crosses the membrane as a helical span at residues 483 to 503 (AFLTGVYGMWNIYIFALLILY). The Cytoplasmic segment spans residues 504–562 (APSHKQWPTMRHSDETTQSNENIVASAASEEIEFSNLPSDSNPSEISSLTSFTRKVAFD). A disordered region spans residues 538–562 (SNLPSDSNPSEISSLTSFTRKVAFD). Polar residues predominate over residues 539-556 (NLPSDSNPSEISSLTSFT).

Belongs to the wntless family. Interacts with wg; in the Golgi. Interacts with Vps35, a component of the retromer complex; wls stability is regulated by Vps35.

The protein localises to the presynaptic cell membrane. It is found in the postsynaptic cell membrane. The protein resides in the cell membrane. It localises to the endoplasmic reticulum membrane. Its subcellular location is the endosome membrane. The protein localises to the golgi apparatus membrane. Functionally, a segment polarity gene required for wingless (wg)-dependent patterning processes, acting in both wg-sending cells and wg-target cells. In non-neuronal cells wls directs wg secretion. The wls traffic loop encompasses the Golgi, the cell surface, an endocytic compartment and a retrograde route leading back to the Golgi, and involves clathrin-mediated endocytosis and the retromer complex (a conserved protein complex consisting of Vps35 and Vps26). In neuronal cells (the larval motorneuron NMJ), the wg signal moves across the synapse via the release of wls-containing exosome-like vesicles. Postsynaptic wls is required for the trafficking of fz2 through the fz2-interacting protein Grip. The polypeptide is Protein wntless (Drosophila mojavensis (Fruit fly)).